Reading from the N-terminus, the 232-residue chain is Small ribosomal subunit protein uS3 (232 aa).

One can recognise a KH type-2 domain in the interval 39-107 (IREILHKELK…DVVINIVEIR (69 aa)).

The protein belongs to the universal ribosomal protein uS3 family. As to quaternary structure, part of the 30S ribosomal subunit. Forms a tight complex with proteins S10 and S14.

Binds the lower part of the 30S subunit head. Binds mRNA in the 70S ribosome, positioning it for translation. In Rhodopseudomonas palustris (strain HaA2), this protein is Small ribosomal subunit protein uS3.